The primary structure comprises 469 residues: Ribulose bisphosphate carboxylase large chain (469 aa).

Residues asparagine 115 and threonine 165 each coordinate substrate. Residue lysine 167 is the Proton acceptor of the active site. Residue lysine 169 participates in substrate binding. Mg(2+) contacts are provided by lysine 193, aspartate 195, and glutamate 196. Residue lysine 193 is modified to N6-carboxylysine. The active-site Proton acceptor is histidine 286. Substrate is bound by residues arginine 287, histidine 319, and serine 371.

This sequence belongs to the RuBisCO large chain family. Type I subfamily. As to quaternary structure, heterohexadecamer of 8 large chains and 8 small chains. The cofactor is Mg(2+).

It is found in the plastid. Its subcellular location is the organellar chromatophore. It catalyses the reaction 2 (2R)-3-phosphoglycerate + 2 H(+) = D-ribulose 1,5-bisphosphate + CO2 + H2O. It carries out the reaction D-ribulose 1,5-bisphosphate + O2 = 2-phosphoglycolate + (2R)-3-phosphoglycerate + 2 H(+). Its function is as follows. RuBisCO catalyzes two reactions: the carboxylation of D-ribulose 1,5-bisphosphate, the primary event in carbon dioxide fixation, as well as the oxidative fragmentation of the pentose substrate. Both reactions occur simultaneously and in competition at the same active site. This chain is Ribulose bisphosphate carboxylase large chain, found in Paulinella chromatophora.